Consider the following 430-residue polypeptide: Enolase (430 aa).

Gln-163 contacts (2R)-2-phosphoglycerate. Glu-205 (proton donor) is an active-site residue. Residues Asp-242, Glu-288, and Asp-315 each contribute to the Mg(2+) site. Lys-340, Arg-369, Ser-370, and Lys-391 together coordinate (2R)-2-phosphoglycerate. The Proton acceptor role is filled by Lys-340.

Belongs to the enolase family. It depends on Mg(2+) as a cofactor.

The protein localises to the cytoplasm. It localises to the secreted. The protein resides in the cell surface. It carries out the reaction (2R)-2-phosphoglycerate = phosphoenolpyruvate + H2O. The protein operates within carbohydrate degradation; glycolysis; pyruvate from D-glyceraldehyde 3-phosphate: step 4/5. Its function is as follows. Catalyzes the reversible conversion of 2-phosphoglycerate (2-PG) into phosphoenolpyruvate (PEP). It is essential for the degradation of carbohydrates via glycolysis. The sequence is that of Enolase from Aster yellows witches'-broom phytoplasma (strain AYWB).